We begin with the raw amino-acid sequence, 248 residues long: UPF0246 protein RF_0769 (248 aa).

Belongs to the UPF0246 family.

This chain is UPF0246 protein RF_0769, found in Rickettsia felis (strain ATCC VR-1525 / URRWXCal2) (Rickettsia azadi).